The sequence spans 201 residues: Large ribosomal subunit protein bL25 (201 aa).

The protein belongs to the bacterial ribosomal protein bL25 family. CTC subfamily. As to quaternary structure, part of the 50S ribosomal subunit; part of the 5S rRNA/L5/L18/L25 subcomplex. Contacts the 5S rRNA. Binds to the 5S rRNA independently of L5 and L18.

Its function is as follows. This is one of the proteins that binds to the 5S RNA in the ribosome where it forms part of the central protuberance. The sequence is that of Large ribosomal subunit protein bL25 from Thiobacillus denitrificans (strain ATCC 25259 / T1).